A 342-amino-acid chain; its full sequence is Nicotinate-nucleotide--dimethylbenzimidazole phosphoribosyltransferase (342 aa).

E311 (proton acceptor) is an active-site residue.

The protein belongs to the CobT family.

The catalysed reaction is 5,6-dimethylbenzimidazole + nicotinate beta-D-ribonucleotide = alpha-ribazole 5'-phosphate + nicotinate + H(+). The protein operates within nucleoside biosynthesis; alpha-ribazole biosynthesis; alpha-ribazole from 5,6-dimethylbenzimidazole: step 1/2. Its function is as follows. Catalyzes the synthesis of alpha-ribazole-5'-phosphate from nicotinate mononucleotide (NAMN) and 5,6-dimethylbenzimidazole (DMB). The sequence is that of Nicotinate-nucleotide--dimethylbenzimidazole phosphoribosyltransferase from Vibrio atlanticus (strain LGP32) (Vibrio splendidus (strain Mel32)).